The chain runs to 392 residues: MTLLGTALRPAATRVMLLGAGELGKEVAIECQRLGIEVIAVDRYPDAPAMHVAHRSHVINMLDGEALRHVITEEKPHYIVPEIEAIATDTLRELEGEGLNVVPCARATQLTMNREGIRRLAAEELGLPTSTYRFADSEASFHDAVAAVGFPCIVKPVMSSSGKGQSFIRSAEQLAQAWEYAQQGGRAGAGRVIVEGVVKFDFEITLLTVSAVDGVHFCAPVGHRQQDGDYRESWQPQQMSELALKRAQEIARHVVLALGGHGLFGVELFVCGDEVIFSEVSPRPHDTGMVTLISQDLSEFALHVRAFLGMPVGAIRQYGPAASAVILPQLTSQNVTFDNVHAAVGAGVQVRLFGKPEIDGTRRLGVALATGENVEEAVIRAKKAVSRVTVKG.

N(1)-(5-phospho-beta-D-ribosyl)glycinamide-binding positions include 22 to 23 and glutamate 82; that span reads EL. Residues arginine 114, lysine 155, 160-165, 195-198, and glutamate 203 each bind ATP; these read SSGKGQ and EGVV. In terms of domain architecture, ATP-grasp spans 119-308; that stretch reads RLAAEELGLP…EFALHVRAFL (190 aa). Mg(2+) contacts are provided by glutamate 267 and glutamate 279. N(1)-(5-phospho-beta-D-ribosyl)glycinamide-binding positions include aspartate 286, lysine 355, and 362–363; that span reads RR.

This sequence belongs to the PurK/PurT family. In terms of assembly, homodimer.

It carries out the reaction N(1)-(5-phospho-beta-D-ribosyl)glycinamide + formate + ATP = N(2)-formyl-N(1)-(5-phospho-beta-D-ribosyl)glycinamide + ADP + phosphate + H(+). Its pathway is purine metabolism; IMP biosynthesis via de novo pathway; N(2)-formyl-N(1)-(5-phospho-D-ribosyl)glycinamide from N(1)-(5-phospho-D-ribosyl)glycinamide (formate route): step 1/1. In terms of biological role, involved in the de novo purine biosynthesis. Catalyzes the transfer of formate to 5-phospho-ribosyl-glycinamide (GAR), producing 5-phospho-ribosyl-N-formylglycinamide (FGAR). Formate is provided by PurU via hydrolysis of 10-formyl-tetrahydrofolate. This chain is Formate-dependent phosphoribosylglycinamide formyltransferase, found in Salmonella typhimurium (strain LT2 / SGSC1412 / ATCC 700720).